Here is a 201-residue protein sequence, read N- to C-terminus: Small ribosomal subunit protein uS4 (201 aa).

Residues 1-42 (MARYTGPVTRKSRRLGTDLVGGDQSFEKRPYPPGQHGRARIK) form a disordered region. Residues 91–157 (SRLDNVVYRA…VPFQIARETA (67 aa)) form the S4 RNA-binding domain.

Belongs to the universal ribosomal protein uS4 family. In terms of assembly, part of the 30S ribosomal subunit. Contacts protein S5. The interaction surface between S4 and S5 is involved in control of translational fidelity.

Its function is as follows. One of the primary rRNA binding proteins, it binds directly to 16S rRNA where it nucleates assembly of the body of the 30S subunit. In terms of biological role, with S5 and S12 plays an important role in translational accuracy. In Mycobacterium marinum (strain ATCC BAA-535 / M), this protein is Small ribosomal subunit protein uS4.